The primary structure comprises 693 residues: MYWQLVRILVLFDCLQKILAIEHDSICIADVDDACPEPSHTVMRLRERNDKKAHLIAKQHGLEIRGQPFLDGKSYFVTHISKQRSRRRKREIISRLQEHPDILSIEEQRPRVRRKRDFLYPDIAHELAGSSTNIRHTGLISNTEPRIDFIQHDAPVLPFPDPLYKEQWYLNNGAQGGFDMNVQAAWLLGYAGRNISVSILDDGIQRDHPDLAANYDPLASTDINGHDDDPTPQDDGDNKHGTRCAGEVASIAGNVYCGVGVAFHAKIGGVRMLDGPVSDSVEAASLSLNRHHIDIYSASWGPEDDGRTFDGPGPLAREAFYRGVKAGRGGKGSIFVWASGNGGSRQDSCSADGYTTSVYTLSVSSATIDNRSPWYLEECPSTIATTYSSANMNQPAIITVDVPHGCTRSHTGTSASAPLAAGIIALALEANPNLTWRDMQHIVLRTANPVPLLNNPGWSVNGVGRRINNKFGYGLMDAGALVKLALIWKTVPEQHICTYDYKLEKPNPRPITGNFQMNFSLEVNGCESGTPVLYLEHVQVLATFRFGKRGDLKLTLFSPRGTSSVLLPPRPQDFNSNGIHKWPFLSVQTWGEDPRGKWTLMVESVSTNRNVGGTFHDWSLLLYGTAEPAQPNDPRHSSVVPSSVSAESPFDRITQHIASQEKKKKQRDSRDWQPKKVENKKSLLVSAQPELRV.

An N-terminal signal peptide occupies residues 1–20 (MYWQLVRILVLFDCLQKILA). Residues 21-116 (IEHDSICIAD…EQRPRVRRKR (96 aa)) constitute a propeptide, inhibition peptide. Asp161 provides a ligand contact to Ca(2+). Residues 167 to 482 (QWYLNNGAQG…YGLMDAGALV (316 aa)) form the Peptidase S8 domain. Asn194 carries an N-linked (GlcNAc...) asparagine glycan. The active-site Charge relay system is the Asp201. Asp202 is a substrate binding site. Residues Asp210, Asp222, Asp227, and Asp229 each coordinate Ca(2+). The tract at residues 215 to 242 (YDPLASTDINGHDDDPTPQDDGDNKHGT) is disordered. Residue 237–238 (DN) participates in substrate binding. The active-site Charge relay system is the His240. Ca(2+) contacts are provided by Ile251, Asn254, Tyr256, and Gly258. 2 disulfide bridges follow: Cys257–Cys406 and Cys349–Cys379. Residues Glu282, 299–304 (SWGPED), Asp310, and 338–341 (ASGN) contribute to the substrate site. Asp304 lines the Ca(2+) pocket. Asp347 provides a ligand contact to Ca(2+). Substrate contacts are provided by Asp352 and Tyr354. Position 377 (Glu377) interacts with Ca(2+). Ser414 serves as the catalytic Charge relay system. Ser414 contacts substrate. Residues Asn433 and Asn518 are each glycosylated (N-linked (GlcNAc...) asparagine). Positions 490–628 (TVPEQHICTY…SLLLYGTAEP (139 aa)) constitute a P/Homo B domain. Cys497 and Cys526 are disulfide-bonded. A disordered region spans residues 629 to 693 (AQPNDPRHSS…LVSAQPELRV (65 aa)). The span at 668–681 (DSRDWQPKKVENKK) shows a compositional bias: basic and acidic residues.

The protein belongs to the peptidase S8 family. Furin subfamily. Requires Ca(2+) as cofactor. In terms of processing, N-glycosylated. The inhibition peptide, which plays the role of an intramolecular chaperone, is probably autocatalytically removed in the endoplasmic reticulum (ER) and remains non-covalently bound as a potent autoinhibitor. Probably following transport to the trans Golgi, a second cleavage within the inhibition propeptide results in propeptide dissociation and bli activation.

Its subcellular location is the secreted. The catalysed reaction is Release of mature proteins from their proproteins by cleavage of -Arg-Xaa-Yaa-Arg-|-Zaa- bonds, where Xaa can be any amino acid and Yaa is Arg or Lys. Releases albumin, complement component C3 and von Willebrand factor from their respective precursors.. Inhibited by the propeptide before the second cleavage. Inhibited by ethylenediaminetetraacetic acid (EDTA), ZnSO(4) and chloroketone DEC-RVKR-CMK. Functionally, serine endoprotease which cleaves substrates at the RX(K/R)R consensus motif. The chain is Endoprotease bli from Onchocerca volvulus.